We begin with the raw amino-acid sequence, 148 residues long: Endoribonuclease YbeY (148 aa).

3 residues coordinate Zn(2+): histidine 102, histidine 106, and histidine 112.

It belongs to the endoribonuclease YbeY family. The cofactor is Zn(2+).

It localises to the cytoplasm. Its function is as follows. Single strand-specific metallo-endoribonuclease involved in late-stage 70S ribosome quality control and in maturation of the 3' terminus of the 16S rRNA. The protein is Endoribonuclease YbeY of Phytoplasma mali (strain AT).